Here is a 443-residue protein sequence, read N- to C-terminus: Adenylyltransferase and sulfurtransferase UBA4 (443 aa).

ATP is bound by residues G81, D102, 109–113 (SNLHR), K126, and 170–171 (DS). Residues C212 and C215 each coordinate Zn(2+). Residue C229 is the Glycyl thioester intermediate; for adenylyltransferase activity of the active site. Zn(2+)-binding residues include C290 and C293. Residues 342–441 (KERGFVCLDV…YIDEINPSLP (100 aa)) form the Rhodanese domain. The Cysteine persulfide intermediate; for sulfurtransferase activity role is filled by C400.

The protein in the N-terminal section; belongs to the HesA/MoeB/ThiF family. UBA4 subfamily. The cofactor is Zn(2+).

It is found in the cytoplasm. The protein localises to the cytosol. Its pathway is tRNA modification; 5-methoxycarbonylmethyl-2-thiouridine-tRNA biosynthesis. Functionally, plays a central role in 2-thiolation of mcm(5)S(2)U at tRNA wobble positions of cytosolic tRNA(Lys), tRNA(Glu) and tRNA(Gln). Acts by mediating the C-terminal thiocarboxylation of sulfur carrier URM1. Its N-terminus first activates URM1 as acyl-adenylate (-COAMP), then the persulfide sulfur on the catalytic cysteine is transferred to URM1 to form thiocarboxylation (-COSH) of its C-terminus. The reaction probably involves hydrogen sulfide that is generated from the persulfide intermediate and that acts as a nucleophile towards URM1. Subsequently, a transient disulfide bond is formed. Does not use thiosulfate as sulfur donor; NFS1 probably acting as a sulfur donor for thiocarboxylation reactions. Prior mcm(5) tRNA modification by the elongator complex is required for 2-thiolation. May also be involved in protein urmylation. The polypeptide is Adenylyltransferase and sulfurtransferase UBA4 (Eremothecium gossypii (strain ATCC 10895 / CBS 109.51 / FGSC 9923 / NRRL Y-1056) (Yeast)).